The sequence spans 335 residues: Tetraacyldisaccharide 4'-kinase (335 aa).

ATP is bound at residue 59–66 (TAGGNGKT).

It belongs to the LpxK family.

The catalysed reaction is a lipid A disaccharide + ATP = a lipid IVA + ADP + H(+). It participates in glycolipid biosynthesis; lipid IV(A) biosynthesis; lipid IV(A) from (3R)-3-hydroxytetradecanoyl-[acyl-carrier-protein] and UDP-N-acetyl-alpha-D-glucosamine: step 6/6. Transfers the gamma-phosphate of ATP to the 4'-position of a tetraacyldisaccharide 1-phosphate intermediate (termed DS-1-P) to form tetraacyldisaccharide 1,4'-bis-phosphate (lipid IVA). The protein is Tetraacyldisaccharide 4'-kinase of Vibrio vulnificus (strain YJ016).